We begin with the raw amino-acid sequence, 319 residues long: Thioredoxin reductase (319 aa).

FAD is bound by residues 11 to 14, 40 to 41, Q45, N54, C145, D288, and 295 to 297; these read SGPA, IA, and RQA. C142 and C145 are oxidised to a cystine.

The protein belongs to the class-II pyridine nucleotide-disulfide oxidoreductase family. In terms of assembly, homodimer. Requires FAD as cofactor.

The protein resides in the cytoplasm. The enzyme catalyses [thioredoxin]-dithiol + NADP(+) = [thioredoxin]-disulfide + NADPH + H(+). This Candida glabrata (strain ATCC 2001 / BCRC 20586 / JCM 3761 / NBRC 0622 / NRRL Y-65 / CBS 138) (Yeast) protein is Thioredoxin reductase (TRR1).